A 265-amino-acid chain; its full sequence is Photosystem II 22 kDa protein, chloroplastic (265 aa).

Residues 1–59 (MAQTMLLTSGVTAGHFLRNKSPLAQPKVHHLFLSGNSPVALPSRRQSFVPLALFKPKTK) constitute a chloroplast transit peptide. Repeat copies occupy residues 54-158 (FKPK…FVDD) and 159-264 (PPTG…DGEE). The next 4 helical transmembrane spans lie at 96 to 116 (VAMIGFAASLLGEALTGKGIL), 130 to 150 (AEPLLLFFILFTLLGAIGALG), 195 to 215 (LFVGRLAQLGIAFSLIGEIIT), and 229 to 249 (IPIQDIEPLVLLNVAFFFFAA).

Belongs to the ELIP/psbS family.

It localises to the plastid. The protein resides in the chloroplast thylakoid membrane. Plays an important role in non-photochemical quenching (NPQ), a process maintains the balance between dissipation and utilization of light energy to minimize generation of oxidizing molecules, thereby protecting the plant against photo-oxidative damage; acts upstream of DLDG1. Is not necessary for efficient light harvesting and photosynthesis. This is Photosystem II 22 kDa protein, chloroplastic from Arabidopsis thaliana (Mouse-ear cress).